Consider the following 607-residue polypeptide: Glutamine--fructose-6-phosphate aminotransferase [isomerizing] (607 aa).

C2 serves as the catalytic Nucleophile; for GATase activity. Residues 2–217 (CGIIGILGKR…DGDWAVLTRE (216 aa)) enclose the Glutamine amidotransferase type-2 domain. SIS domains follow at residues 277-422 (TVRS…QRGF) and 455-597 (ICRN…VDQP). The active-site For Fru-6P isomerization activity is the K602.

As to quaternary structure, homodimer.

The protein resides in the cytoplasm. It carries out the reaction D-fructose 6-phosphate + L-glutamine = D-glucosamine 6-phosphate + L-glutamate. In terms of biological role, catalyzes the first step in hexosamine metabolism, converting fructose-6P into glucosamine-6P using glutamine as a nitrogen source. This is Glutamine--fructose-6-phosphate aminotransferase [isomerizing] from Bartonella henselae (strain ATCC 49882 / DSM 28221 / CCUG 30454 / Houston 1) (Rochalimaea henselae).